Reading from the N-terminus, the 209-residue chain is Ribosomal RNA large subunit methyltransferase E (209 aa).

5 residues coordinate S-adenosyl-L-methionine: G63, W65, D83, D99, and D124. Catalysis depends on K164, which acts as the Proton acceptor.

This sequence belongs to the class I-like SAM-binding methyltransferase superfamily. RNA methyltransferase RlmE family.

It is found in the cytoplasm. It catalyses the reaction uridine(2552) in 23S rRNA + S-adenosyl-L-methionine = 2'-O-methyluridine(2552) in 23S rRNA + S-adenosyl-L-homocysteine + H(+). In terms of biological role, specifically methylates the uridine in position 2552 of 23S rRNA at the 2'-O position of the ribose in the fully assembled 50S ribosomal subunit. In Shigella dysenteriae serotype 1 (strain Sd197), this protein is Ribosomal RNA large subunit methyltransferase E.